Here is a 419-residue protein sequence, read N- to C-terminus: Septin-2 (419 aa).

The Septin-type G domain maps to 40-306 (NGFVFNVMCI…ELYRQKRLEQ (267 aa)). Positions 50-57 (GETGLGKS) are G1 motif. GTP contacts are provided by residues 50–57 (GETGLGKS), serine 79, glycine 105, 186–194 (KADTISKVE), glycine 240, and arginine 255. The tract at residues 102 to 105 (DTVG) is G3 motif. The segment at 185 to 188 (AKAD) is G4 motif. The important for dimerization stretch occupies residues 259 to 269 (WGTVQVENETH).

It belongs to the TRAFAC class TrmE-Era-EngA-EngB-Septin-like GTPase superfamily. Septin GTPase family. In terms of assembly, may assemble into a multicomponent structure.

It localises to the cytoplasm. The protein localises to the cytoskeleton. The protein resides in the spindle. Its function is as follows. Involved in cytokinesis. The sequence is that of Septin-2 from Drosophila melanogaster (Fruit fly).